The sequence spans 599 residues: Exocyst complex component EXO70B2 (599 aa).

Residues 38–58 form a disordered region; that stretch reads GASGNRGGDPRPTPSRGGSNV.

The protein belongs to the EXO70 family. As to quaternary structure, self interacts. Interacts with EXO70B1. Interacts with the exocyst subunits EXO70H1, SEC5A and SEC15B. Binds to SNAP33. Subunit of the exocyst complex that mediates vesicle tethering during exocytosis. Binds to PUB22. Post-translationally, target of the E3 ubiquitin-protein ligase PUB22 that mediates its ubiquitination and degradation via the 26S proteasome to attenuate pathogen-associated molecular patterns (PAMP)-induced signaling, especially is response to the bacterial elicitor flg22. Mostly expressed in leaves and, to a lower extent, in roots, cotyledons, internodes, flower buds, siliques and anthers.

The protein localises to the cytoplasmic vesicle. It is found in the phagosome. The protein resides in the cytoplasm. It localises to the nucleus. Its function is as follows. Component of an exocyst subcomplex specifically involved in autophagy-related, Golgi-independent membrane traffic to the vacuole. Regulates autophagosome formation and autophagy-related Golgi-independent import into the vacuole. Positive regulator of defense responses to pathogenic bacteria (e.g. P.syringae pv. maculicola), to the biotrophic oomycete H.arabidopsidis and to fungi (e.g. B.graminis hordei), especially in cell wall apposition formation related to plant defense. Required for both immediate and later responses triggered by pathogen-associated molecular patterns (PAMPs). Positive regulator of abscisic acid (ABA)-independent mannitol (drought)-promoted stomatal closure. This is Exocyst complex component EXO70B2 from Arabidopsis thaliana (Mouse-ear cress).